A 323-amino-acid polypeptide reads, in one-letter code: MTALNHWQPSADIKNHLKRAKIIAKIRQFFTERGLLEVETPVLSEFGVTDLHLSTFSTEFLAPFGEQSKTLWLSTSPEYHMKRLLAAGSGPIFQISKVFRNEEAGNRHNPEFTMLEWYRPHFHMHRLINEVDDLLQQILDCPPAESLSYQFVFQEYVGLDPLSAERSELIEAARKHNFMAEDNEDRDTLLQFLFSEVVEPQIGKERPIAVYHFPSTQAALAQVSPEDQRVAERFEFYYKGLELANGFHELADAQEQRHRFELDNQQRQKCELPTREIDERFLAALEAGMPDASGVALGIDRLMMIALDCEKINDVISFAVDNA.

Residue 76 to 78 (SPE) coordinates substrate. ATP contacts are provided by residues 100–102 (RNE) and Asn-109. Tyr-118 lines the substrate pocket. An ATP-binding site is contributed by 242–243 (EL). Residue Glu-249 coordinates substrate. Residue Gly-298 coordinates ATP.

This sequence belongs to the class-II aminoacyl-tRNA synthetase family. EpmA subfamily. Homodimer.

It carries out the reaction D-beta-lysine + L-lysyl-[protein] + ATP = N(6)-((3R)-3,6-diaminohexanoyl)-L-lysyl-[protein] + AMP + diphosphate + H(+). With EpmB is involved in the beta-lysylation step of the post-translational modification of translation elongation factor P (EF-P). Catalyzes the ATP-dependent activation of (R)-beta-lysine produced by EpmB, forming a lysyl-adenylate, from which the beta-lysyl moiety is then transferred to the epsilon-amino group of a conserved specific lysine residue in EF-P. The protein is Elongation factor P--(R)-beta-lysine ligase of Haemophilus influenzae (strain ATCC 51907 / DSM 11121 / KW20 / Rd).